Here is a 186-residue protein sequence, read N- to C-terminus: MTPSPPPITYISIPLPTNDVVSRSIHNLTTAISSHRPWSELIFSGDFSLPESFSSLLLRSKTNFNYFFVNYTIIVSTCAAFALITASPVALIVVGAIIALWLIFHFFREDPLILWSFQVGDRTVLLFLVLASVWAIWFTNSAVNLAVGVSVGLLLCIIHAVFRNSDELFLEEDDAINGGLIGSNLR.

The next 4 membrane-spanning stretches (helical) occupy residues 66–86 (YFFVNYTIIVSTCAAFALITA), 87–107 (SPVALIVVGAIIALWLIFHFF), 119–139 (VGDRTVLLFLVLASVWAIWFT), and 142–162 (AVNLAVGVSVGLLLCIIHAVF).

It belongs to the PRA1 family. As to expression, expressed in roots and trichomes.

Its subcellular location is the endoplasmic reticulum membrane. May be involved in both secretory and endocytic intracellular trafficking in the endosomal/prevacuolar compartments. This chain is PRA1 family protein G2 (PRA1G2), found in Arabidopsis thaliana (Mouse-ear cress).